A 181-amino-acid chain; its full sequence is Large ribosomal subunit protein uL6 (181 aa).

It belongs to the universal ribosomal protein uL6 family. Part of the 50S ribosomal subunit.

Its function is as follows. This protein binds to the 23S rRNA, and is important in its secondary structure. It is located near the subunit interface in the base of the L7/L12 stalk, and near the tRNA binding site of the peptidyltransferase center. The sequence is that of Large ribosomal subunit protein uL6 from Saccharolobus solfataricus (strain ATCC 35092 / DSM 1617 / JCM 11322 / P2) (Sulfolobus solfataricus).